A 309-amino-acid polypeptide reads, in one-letter code: Anamorsin (309 aa).

The tract at residues 6-172 is N-terminal SAM-like domain; it reads ISPGQLVAVF…KPNFEVGSSS (167 aa). Positions 173–222 are linker; sequence QLKLPNKKSSSVKPVVDPAAAKLWTLSANDMEDDSVDLIDSDELLDPEDL. A phosphoserine mark is found at S182, S183, and S213. Positions 235, 244, 247, and 249 each coordinate [2Fe-2S] cluster. The interval 235–249 is fe-S binding site A; sequence CGEGKKRKACKNCTC. A Phosphoserine modification is found at S269. Residues C271, C274, C282, and C285 each contribute to the [4Fe-4S] cluster site. 2 short sequence motifs (cx2C motif) span residues 271 to 274 and 282 to 285; these read CGNC and CANC. A fe-S binding site B region spans residues 271 to 285; the sequence is CGNCYLGDAFRCANC. 2 positions are modified to phosphoserine: S302 and S304.

It belongs to the anamorsin family. Monomer. Interacts with NDOR1. Interacts with CHCHD4. The cofactor is [2Fe-2S] cluster. It depends on [4Fe-4S] cluster as a cofactor.

It localises to the cytoplasm. The protein resides in the nucleus. It is found in the mitochondrion intermembrane space. In terms of biological role, component of the cytosolic iron-sulfur (Fe-S) protein assembly (CIA) machinery required for the maturation of extramitochondrial Fe-S proteins. Part of an electron transfer chain functioning in an early step of cytosolic Fe-S biogenesis, facilitating the de novo assembly of a [4Fe-4S] cluster on the scaffold complex NUBP1-NUBP2. Electrons are transferred to CIAPIN1 from NADPH via the FAD- and FMN-containing protein NDOR1. NDOR1-CIAPIN1 are also required for the assembly of the diferric tyrosyl radical cofactor of ribonucleotide reductase (RNR), probably by providing electrons for reduction during radical cofactor maturation in the catalytic small subunit. Has anti-apoptotic effects in the cell. Involved in negative control of cell death upon cytokine withdrawal. Promotes development of hematopoietic cells. This chain is Anamorsin, found in Mus musculus (Mouse).